Reading from the N-terminus, the 304-residue chain is Glycine--tRNA ligase alpha subunit (304 aa).

This sequence belongs to the class-II aminoacyl-tRNA synthetase family. In terms of assembly, tetramer of two alpha and two beta subunits.

The protein resides in the cytoplasm. It catalyses the reaction tRNA(Gly) + glycine + ATP = glycyl-tRNA(Gly) + AMP + diphosphate. The sequence is that of Glycine--tRNA ligase alpha subunit from Streptococcus agalactiae serotype Ia (strain ATCC 27591 / A909 / CDC SS700).